The primary structure comprises 185 residues: Adenine phosphoribosyltransferase (185 aa).

It belongs to the purine/pyrimidine phosphoribosyltransferase family. In terms of assembly, homodimer.

It localises to the cytoplasm. It catalyses the reaction AMP + diphosphate = 5-phospho-alpha-D-ribose 1-diphosphate + adenine. It participates in purine metabolism; AMP biosynthesis via salvage pathway; AMP from adenine: step 1/1. Its function is as follows. Catalyzes a salvage reaction resulting in the formation of AMP, that is energically less costly than de novo synthesis. This chain is Adenine phosphoribosyltransferase, found in Kineococcus radiotolerans (strain ATCC BAA-149 / DSM 14245 / SRS30216).